Here is a 462-residue protein sequence, read N- to C-terminus: MAQTVVVGLGRSGQGAARLLQATGHPVSVIDSGQGEQLEKKAEGLRQQGVEVQLQAPLAIDSFRPWLDQLQRVVISPGVPWDHPTLDDLRQRGVAVDGEMAVAWDALKHIPWVGITGTNGKTTVTHLLSHVLCQAGLAAPMGGNMGVSAAEMALNLQQEHTTAPDWLVMELSSYQIEAAKRIRPRIGIWTTLTPDHLERHGTVEAYRAIKRGLLERSDHAIFNADDPDLRQQRQSWTGGTWVSAESAQPDGHPADLWINGKGWVCDRSQPLFPAEALAMPGAHNRQNLLLVTAAARQIGLSPASIVAGLRSFPGVPHRLEPVGRIGNAQVFNDSKATNYDAAAVGLKAMQGPVVVLAGGSTKQGDATGWLEELNRKACAVVLFGAGTEELHGLITGANFTGELTRRTDLTSAVEEAVRSAEALGATSLLLSPACASFDQYRDFEARGDHFKQLIHQVQSGLN.

117–123 (GTNGKTT) serves as a coordination point for ATP.

The protein belongs to the MurCDEF family.

The protein resides in the cytoplasm. The catalysed reaction is UDP-N-acetyl-alpha-D-muramoyl-L-alanine + D-glutamate + ATP = UDP-N-acetyl-alpha-D-muramoyl-L-alanyl-D-glutamate + ADP + phosphate + H(+). It participates in cell wall biogenesis; peptidoglycan biosynthesis. In terms of biological role, cell wall formation. Catalyzes the addition of glutamate to the nucleotide precursor UDP-N-acetylmuramoyl-L-alanine (UMA). This Parasynechococcus marenigrum (strain WH8102) protein is UDP-N-acetylmuramoylalanine--D-glutamate ligase.